A 577-amino-acid chain; its full sequence is Proline--tRNA ligase (577 aa).

It belongs to the class-II aminoacyl-tRNA synthetase family. ProS type 1 subfamily. Homodimer.

The protein resides in the cytoplasm. The enzyme catalyses tRNA(Pro) + L-proline + ATP = L-prolyl-tRNA(Pro) + AMP + diphosphate. In terms of biological role, catalyzes the attachment of proline to tRNA(Pro) in a two-step reaction: proline is first activated by ATP to form Pro-AMP and then transferred to the acceptor end of tRNA(Pro). As ProRS can inadvertently accommodate and process non-cognate amino acids such as alanine and cysteine, to avoid such errors it has two additional distinct editing activities against alanine. One activity is designated as 'pretransfer' editing and involves the tRNA(Pro)-independent hydrolysis of activated Ala-AMP. The other activity is designated 'posttransfer' editing and involves deacylation of mischarged Ala-tRNA(Pro). The misacylated Cys-tRNA(Pro) is not edited by ProRS. The chain is Proline--tRNA ligase from Janthinobacterium sp. (strain Marseille) (Minibacterium massiliensis).